Consider the following 1300-residue polypeptide: Insulin receptor-related protein (1300 aa).

Positions 1 to 26 are cleaved as a signal peptide; sequence MAVPALWPWGVHLLMSLLSLGSGLDT. Asn-47 and Asn-100 each carry an N-linked (GlcNAc...) asparagine glycan. Intrachain disulfides connect Cys-214–Cys-222, Cys-216–Cys-228, Cys-229–Cys-237, Cys-233–Cys-246, Cys-249–Cys-258, Cys-262–Cys-274, Cys-280–Cys-300, Cys-304–Cys-317, and Cys-320–Cys-324. The N-linked (GlcNAc...) asparagine glycan is linked to Asn-311. N-linked (GlcNAc...) asparagine glycosylation is found at Asn-411, Asn-492, Asn-528, Asn-616, Asn-634, Asn-756, Asn-885, and Asn-898. Fibronectin type-III domains lie at 483 to 603 and 607 to 707; these read QTRT…TLPA and VPQD…AQEV. A disulfide bond links Cys-657 and Cys-864. Over 747–921 the chain is Extracellular; that stretch reads EAGLLRLGKN…LEEEDTGGMR (175 aa). Residues 818-913 form the Fibronectin type-III 3 domain; that stretch reads IPGKVAWKAA…GVTFYITDLE (96 aa). A helical transmembrane segment spans residues 922–943; that stretch reads IFLTVTPVGFMLLVTLAALGFF. The Cytoplasmic segment spans residues 944 to 1300; it reads YSRKRNSTLY…YSAPNGGPGH (357 aa). One can recognise a Protein kinase domain in the interval 979–1254; that stretch reads IAIIRELGQG…RIQDELRPSF (276 aa). ATP contacts are provided by residues 985-993 and Lys-1013; that span reads LGQGSFGMV. Asp-1115 functions as the Proton acceptor in the catalytic mechanism. 2 positions are modified to phosphotyrosine; by autocatalysis: Tyr-1145 and Tyr-1146. Residues 1273 to 1300 form a disordered region; that stretch reads LPTEAEPDSPPTLNGASDYSAPNGGPGH.

The protein belongs to the protein kinase superfamily. Tyr protein kinase family. Insulin receptor subfamily. Probable tetramer of 2 alpha and 2 beta chains linked by disulfide bonds. The alpha chains contribute to the formation of the ligand-binding domain, while the beta chains carry the kinase domain. In terms of processing, autophosphorylated on tyrosine residues between pH 7.9 and pH 10.5. Highly expressed in the islets as well as in pancreatic beta-cells.

The protein resides in the membrane. The enzyme catalyses L-tyrosyl-[protein] + ATP = O-phospho-L-tyrosyl-[protein] + ADP + H(+). Receptor with tyrosine-protein kinase activity. Functions as a pH sensing receptor which is activated by increased extracellular pH. Activates an intracellular signaling pathway that involves IRS1 and AKT1/PKB. This Mus musculus (Mouse) protein is Insulin receptor-related protein (Insrr).